A 217-amino-acid chain; its full sequence is Uracil-DNA glycosylase (217 aa).

The active-site Proton acceptor is the D62.

This sequence belongs to the uracil-DNA glycosylase (UDG) superfamily. UNG family.

It is found in the cytoplasm. It catalyses the reaction Hydrolyzes single-stranded DNA or mismatched double-stranded DNA and polynucleotides, releasing free uracil.. Excises uracil residues from the DNA which can arise as a result of misincorporation of dUMP residues by DNA polymerase or due to deamination of cytosine. In Streptococcus pyogenes serotype M49 (strain NZ131), this protein is Uracil-DNA glycosylase.